A 246-amino-acid chain; its full sequence is Probable transcriptional regulatory protein BVU_3469 (246 aa).

It belongs to the TACO1 family.

It localises to the cytoplasm. The chain is Probable transcriptional regulatory protein BVU_3469 from Phocaeicola vulgatus (strain ATCC 8482 / DSM 1447 / JCM 5826 / CCUG 4940 / NBRC 14291 / NCTC 11154) (Bacteroides vulgatus).